Here is a 608-residue protein sequence, read N- to C-terminus: MIQVLLVTICLAAFPYQGSSIILESGNVNDYEVVYPRKVTALPEGAVQQKYEDAMQYEFKVNGEPVVLHLEKNKGLFSEDYSETHYSPDGREITTYPSVEDHCYYHGRIQNDADLTASISACNGLKGHFMLQGEMYLIEPLKLSDSEAHAVFKYENVEKEDEAPKMCGVTQNWKSYEPIKKASQSNLTPEQQRYLNAPKFVKLFLVADNIMYLKYGRSLTNVRTRMYDMANILNLIFRRMNIHVAVTDLEIWSDKDKIIVQPSADDTLKSFATWRESVLLKHKSHDNAQLLTGINFNGPTAGLAYLGGICDPMYSTAIVQDHNKIHHLVAIAMAHEMGHNLGIDHDKDTCTCAAKSCVMAGTLSCEASYLFSDCSRKEHRAFLIKNMPQCILKKPSKTDVVSPPVCGNYFVEMGEDCDCGSPATCRDPCCDAATCKLKQGAQCAEGLCCDQCRFKGAGTQCRAAMDECDMADLCTGQSADCTDRFQKNGQPCQNNNGYCYNGTCPTMIKQCTVFFGSNAAVSQDACFQFNLQGNNYGYCRKEQNTKIACEPQNVKCGRLYCTSPEKQNPCNIYYSPSNEDKGMVLPGTKCADGKACSNGQCVDVTTPY.

The first 20 residues, 1–20 (MIQVLLVTICLAAFPYQGSS), serve as a signal peptide directing secretion. Residues 21–189 (IILESGNVND…KKASQSNLTP (169 aa)) constitute a propeptide that is removed on maturation. A Peptidase M12B domain is found at 199-395 (KFVKLFLVAD…NMPQCILKKP (197 aa)). 3 cysteine pairs are disulfide-bonded: Cys-310/Cys-390, Cys-350/Cys-374, and Cys-352/Cys-357. Residue His-335 participates in Zn(2+) binding. Residue Glu-336 is part of the active site. Residues His-339 and His-345 each contribute to the Zn(2+) site. The Disintegrin domain maps to 403–488 (PPVCGNYFVE…ADCTDRFQKN (86 aa)). Residues Val-405, Asn-408, Phe-410, Glu-412, Glu-415, and Asp-418 each contribute to the Ca(2+) site. Intrachain disulfides connect Cys-406–Cys-435, Cys-417–Cys-430, Cys-419–Cys-425, Cys-429–Cys-452, Cys-443–Cys-449, Cys-448–Cys-474, Cys-461–Cys-481, Cys-468–Cys-499, Cys-492–Cys-504, Cys-511–Cys-561, Cys-526–Cys-570, Cys-539–Cys-549, Cys-556–Cys-596, and Cys-590–Cys-601. The D/ECD-tripeptide motif lies at 467 to 469 (ECD). Ca(2+) is bound by residues Asp-469, Met-470, Asp-472, Asp-483, and Arg-484. Residue Asn-501 is glycosylated (N-linked (GlcNAc...) asparagine).

The protein belongs to the venom metalloproteinase (M12B) family. P-III subfamily. P-IIIc sub-subfamily. In terms of assembly, homodimer; disulfide-linked. Requires Zn(2+) as cofactor. In terms of tissue distribution, expressed by the venom gland.

Its subcellular location is the secreted. Inhibited by EDTA and EGTA. Not inhibited by PMSF, antipain, pepstatin, and iodoacetamide. Its function is as follows. Strongly inhibits the collagen-induced human platelet aggregation. Hydrolyzes the Aalpha-chain of fibrinogen (FGA), without cleavage of Bbeta- and gamma-chains. Induces apoptosis and strongly inhibits proliferation of endothelial cells as well as adhesion of the cells to extracellular matrix proteins. This Deinagkistrodon acutus (Hundred-pace snake) protein is Zinc metalloproteinase-disintegrin-like agkihagin.